The chain runs to 325 residues: Biotin synthase (325 aa).

Residues 43–262 (CSVETAQLLS…VAVARLLMPR (220 aa)) enclose the Radical SAM core domain. [4Fe-4S] cluster is bound by residues cysteine 58, cysteine 62, and cysteine 65. [2Fe-2S] cluster is bound by residues cysteine 102, cysteine 133, cysteine 193, and arginine 266.

It belongs to the radical SAM superfamily. Biotin synthase family. Homodimer. The cofactor is [4Fe-4S] cluster. [2Fe-2S] cluster is required as a cofactor.

It catalyses the reaction (4R,5S)-dethiobiotin + (sulfur carrier)-SH + 2 reduced [2Fe-2S]-[ferredoxin] + 2 S-adenosyl-L-methionine = (sulfur carrier)-H + biotin + 2 5'-deoxyadenosine + 2 L-methionine + 2 oxidized [2Fe-2S]-[ferredoxin]. It participates in cofactor biosynthesis; biotin biosynthesis; biotin from 7,8-diaminononanoate: step 2/2. Catalyzes the conversion of dethiobiotin (DTB) to biotin by the insertion of a sulfur atom into dethiobiotin via a radical-based mechanism. In Azorhizobium caulinodans (strain ATCC 43989 / DSM 5975 / JCM 20966 / LMG 6465 / NBRC 14845 / NCIMB 13405 / ORS 571), this protein is Biotin synthase.